Reading from the N-terminus, the 103-residue chain is Large ribosomal subunit protein uL24 (103 aa).

The protein belongs to the universal ribosomal protein uL24 family. Part of the 50S ribosomal subunit.

In terms of biological role, one of two assembly initiator proteins, it binds directly to the 5'-end of the 23S rRNA, where it nucleates assembly of the 50S subunit. Functionally, one of the proteins that surrounds the polypeptide exit tunnel on the outside of the subunit. The polypeptide is Large ribosomal subunit protein uL24 (Corynebacterium urealyticum (strain ATCC 43042 / DSM 7109)).